A 485-amino-acid chain; its full sequence is N-succinylglutamate 5-semialdehyde dehydrogenase (485 aa).

220–225 (GSANTG) contributes to the NAD(+) binding site. Catalysis depends on residues Glu-243 and Cys-278.

It belongs to the aldehyde dehydrogenase family. AstD subfamily.

The enzyme catalyses N-succinyl-L-glutamate 5-semialdehyde + NAD(+) + H2O = N-succinyl-L-glutamate + NADH + 2 H(+). The protein operates within amino-acid degradation; L-arginine degradation via AST pathway; L-glutamate and succinate from L-arginine: step 4/5. Its function is as follows. Catalyzes the NAD-dependent reduction of succinylglutamate semialdehyde into succinylglutamate. The polypeptide is N-succinylglutamate 5-semialdehyde dehydrogenase (Vibrio vulnificus (strain YJ016)).